We begin with the raw amino-acid sequence, 129 residues long: Large ribosomal subunit protein bL19c (129 aa).

It belongs to the bacterial ribosomal protein bL19 family.

It localises to the plastid. In Prototheca wickerhamii, this protein is Large ribosomal subunit protein bL19c.